The chain runs to 171 residues: 3-hydroxydecanoyl-[acyl-carrier-protein] dehydratase (171 aa).

The active site involves H70.

It belongs to the thioester dehydratase family. FabA subfamily. As to quaternary structure, homodimer.

The protein localises to the cytoplasm. The enzyme catalyses a (3R)-hydroxyacyl-[ACP] = a (2E)-enoyl-[ACP] + H2O. It catalyses the reaction (3R)-hydroxydecanoyl-[ACP] = (2E)-decenoyl-[ACP] + H2O. The catalysed reaction is (2E)-decenoyl-[ACP] = (3Z)-decenoyl-[ACP]. Its pathway is lipid metabolism; fatty acid biosynthesis. Functionally, necessary for the introduction of cis unsaturation into fatty acids. Catalyzes the dehydration of (3R)-3-hydroxydecanoyl-ACP to E-(2)-decenoyl-ACP and then its isomerization to Z-(3)-decenoyl-ACP. Can catalyze the dehydratase reaction for beta-hydroxyacyl-ACPs with saturated chain lengths up to 16:0, being most active on intermediate chain length. This Shewanella woodyi (strain ATCC 51908 / MS32) protein is 3-hydroxydecanoyl-[acyl-carrier-protein] dehydratase.